A 427-amino-acid chain; its full sequence is Glutamate-1-semialdehyde 2,1-aminomutase (427 aa).

Lys-265 is subject to N6-(pyridoxal phosphate)lysine.

It belongs to the class-III pyridoxal-phosphate-dependent aminotransferase family. HemL subfamily. In terms of assembly, homodimer. Pyridoxal 5'-phosphate serves as cofactor.

It is found in the cytoplasm. The catalysed reaction is (S)-4-amino-5-oxopentanoate = 5-aminolevulinate. The protein operates within porphyrin-containing compound metabolism; protoporphyrin-IX biosynthesis; 5-aminolevulinate from L-glutamyl-tRNA(Glu): step 2/2. This Pseudomonas aeruginosa (strain UCBPP-PA14) protein is Glutamate-1-semialdehyde 2,1-aminomutase.